The chain runs to 248 residues: MKLFVGLGNPGAKYAGNRHNIGFMALDQIASDHGFSPWKSKFQAQMSEGTLSGEKVILLKPQTFMNNSGQSVGEALRFFKLTPADVVVFHDELDLAPSKCRVKNGGGHAGHNGLRSIHAHIGADYGRVRLGVGHPGHKDAVAGYVLRDFPKADQGWLDDLMRGLSDGAAALATGDSGRFMNAVALRVAPPRSSTGEASKGRKKAQKSEPGVAKTPAKAATPEAPAAGDIPAAPEDSRSPMQKLLDKFK.

Residue tyrosine 14 participates in tRNA binding. Residue histidine 19 is the Proton acceptor of the active site. Positions 64, 66, and 112 each coordinate tRNA. A disordered region spans residues proline 190–lysine 248. Residues alanine 212–alanine 226 are compositionally biased toward low complexity.

It belongs to the PTH family. Monomer.

Its subcellular location is the cytoplasm. The enzyme catalyses an N-acyl-L-alpha-aminoacyl-tRNA + H2O = an N-acyl-L-amino acid + a tRNA + H(+). Its function is as follows. Hydrolyzes ribosome-free peptidyl-tRNAs (with 1 or more amino acids incorporated), which drop off the ribosome during protein synthesis, or as a result of ribosome stalling. In terms of biological role, catalyzes the release of premature peptidyl moieties from peptidyl-tRNA molecules trapped in stalled 50S ribosomal subunits, and thus maintains levels of free tRNAs and 50S ribosomes. The protein is Peptidyl-tRNA hydrolase of Ruegeria sp. (strain TM1040) (Silicibacter sp.).